The following is a 2303-amino-acid chain: Adenomatous polyposis coli protein 2 (2303 aa).

Positions Tyr-8–Gln-59 form a coiled coil. Disordered stretches follow at residues Pro-94–Phe-120 and Val-247–Asn-270. ARM repeat units lie at residues Pro-302 to Lys-341, Ala-479 to Trp-518, Ile-522 to Ala-562, Glu-566 to Ser-609, Glu-615 to Ala-654, and Ala-657 to Ala-696. Disordered regions lie at residues Lys-744–Leu-764 and Leu-816–Gly-835. Positions Gly-825–Ser-834 are enriched in basic and acidic residues. Residues Ala-840–Leu-864 adopt a coiled-coil conformation. Disordered regions lie at residues Ser-867–Arg-908, Arg-953–Ala-986, Arg-1069–Val-1152, and Ser-1173–Gln-1228. Low complexity predominate over residues Asp-869–Asp-878. Repeat 1 spans residues Leu-1058–Ser-1077. Residues Leu-1058 to Ser-1587 form a 5 X 20 AA approximate repeat of F-X-V-E-X-T-P-X-C-F-S-R-X-S-S-L-S-S-L-S region. The interaction with CTNNB1 stretch occupies residues Leu-1058–Ser-1587. Low complexity predominate over residues Arg-1069–Pro-1084. The segment covering Gly-1088–Glu-1101 has biased composition (acidic residues). The segment covering Thr-1143–Val-1152 has biased composition (polar residues). Residues Asn-1150–Gly-1169 form repeat 2. A compositionally biased stretch (low complexity) spans Ser-1173–Ser-1186. The span at Pro-1202–Lys-1212 shows a compositional bias: polar residues. The stretch at Phe-1263–Ala-1282 is repeat 3. Disordered regions lie at residues Gly-1307 to Ala-1335, Pro-1382 to Cys-1497, Tyr-1510 to Val-1684, Leu-1724 to Pro-2031, and Leu-2046 to Gly-2232. The segment covering Thr-1390–Thr-1410 has biased composition (polar residues). Copy 4 of the repeat occupies Asp-1391 to Thr-1410. 2 stretches are compositionally biased toward basic and acidic residues: residues Ala-1477–Gly-1489 and Phe-1537–Ala-1548. The stretch at Leu-1568–Ser-1587 is repeat 5. Low complexity predominate over residues Ser-1578–Pro-1589. A phosphoserine mark is found at Ser-1585 and Ser-1587. Over residues Pro-1638 to Ala-1654 the composition is skewed to basic residues. Basic and acidic residues-rich tracts occupy residues Thr-1655–Glu-1671 and Arg-1739–Gly-1755. Low complexity predominate over residues Ala-1819–Ala-1830. Residues Pro-1821 to Leu-1900 form a required for localization to microtubules and function in microtubule stabilization region. Over residues Glu-1851–Arg-1860 the composition is skewed to polar residues. Composition is skewed to low complexity over residues Leu-1868–Leu-1886, Gly-1971–Glu-1984, Leu-2011–Pro-2026, Ala-2049–Pro-2062, and Gly-2113–Asp-2123. Positions Ser-2067–Thr-2144 are interaction with MAPRE1 and MAPRE3. The span at Ala-2124 to Pro-2135 shows a compositional bias: basic and acidic residues. The segment covering Lys-2200–Leu-2209 has biased composition (polar residues).

The protein belongs to the adenomatous polyposis coli (APC) family. Interacts with PSRC1. Interacts with APC. Interacts with CTNNB1. Interacts with MAPRE1 and MAPRE3. Interacts with TP53BP. Interacts possibly with AXIN2. Widely expressed (at protein level). Specifically expressed in the CNS.

It is found in the cytoplasm. It localises to the cytoskeleton. The protein resides in the golgi apparatus. Its subcellular location is the perinuclear region. Stabilizes microtubules and may regulate actin fiber dynamics through the activation of Rho family GTPases. May also function in Wnt signaling by promoting the rapid degradation of CTNNB1. The protein is Adenomatous polyposis coli protein 2 of Homo sapiens (Human).